Reading from the N-terminus, the 185-residue chain is Ribosome-recycling factor (185 aa).

The interval 143–163 (RKDGEAGEDEVARAEKDLDKS) is disordered.

The protein belongs to the RRF family.

Its subcellular location is the cytoplasm. Responsible for the release of ribosomes from messenger RNA at the termination of protein biosynthesis. May increase the efficiency of translation by recycling ribosomes from one round of translation to another. The polypeptide is Ribosome-recycling factor (Mycobacterium marinum (strain ATCC BAA-535 / M)).